Reading from the N-terminus, the 171-residue chain is Peptide deformylase 1 (171 aa).

The Fe cation site is built by C99 and H141. The active site involves E142. Fe cation is bound at residue H145.

It belongs to the polypeptide deformylase family. Requires Fe(2+) as cofactor.

The enzyme catalyses N-terminal N-formyl-L-methionyl-[peptide] + H2O = N-terminal L-methionyl-[peptide] + formate. Functionally, removes the formyl group from the N-terminal Met of newly synthesized proteins. Requires at least a dipeptide for an efficient rate of reaction. N-terminal L-methionine is a prerequisite for activity but the enzyme has broad specificity at other positions. The sequence is that of Peptide deformylase 1 from Xanthomonas campestris pv. campestris (strain ATCC 33913 / DSM 3586 / NCPPB 528 / LMG 568 / P 25).